We begin with the raw amino-acid sequence, 318 residues long: Chlorophyllase-2 (318 aa).

The GXSXG signature appears at 136–140; the sequence is GHSRG. Catalysis depends on Ser-138, which acts as the Nucleophile. Residues Asp-167 and His-244 each act as charge relay system in the active site.

It belongs to the AB hydrolase superfamily. Lipase family. In terms of tissue distribution, expressed in leaves, flowers and flower buds, but not in roots.

It localises to the cytoplasm. The protein localises to the cytosol. The catalysed reaction is a chlorophyll + H2O = a chlorophyllide + phytol + H(+). It carries out the reaction chlorophyll a + H2O = phytol + chlorophyllide a + H(+). It participates in porphyrin-containing compound metabolism; chlorophyll degradation. Its function is as follows. Catalyzes the hydrolysis of ester bond in chlorophyll to yield chlorophyllide and phytol. Does not seem to be required for chlorophyll degradation during senescence. This chain is Chlorophyllase-2, found in Arabidopsis thaliana (Mouse-ear cress).